The primary structure comprises 66 residues: Large ribosomal subunit protein bL35 (66 aa).

Basic residues-rich tracts occupy residues 1–15 (MPKL…KRFK) and 28–45 (TKRH…RTRR). The interval 1 to 49 (MPKLKTKSSAKKRFKVTASGRVMSAQSTKRHGMTKRSKRSLRTRRGIAQ) is disordered.

The protein belongs to the bacterial ribosomal protein bL35 family.

The protein is Large ribosomal subunit protein bL35 of Anaplasma marginale (strain Florida).